Consider the following 99-residue polypeptide: MICOS complex subunit MIC10 (99 aa).

Transmembrane regions (helical) follow at residues 27–43 (RFVYSSLGGAFAGLLFF) and 50–66 (WASIAFGAGIGIGSAYT).

This sequence belongs to the MICOS complex subunit Mic10 family. As to quaternary structure, component of the mitochondrial contact site and cristae organizing system (MICOS) complex. The MICOS complex associates with mitochondrial outer membrane proteins. Present in a large lipid-enriched complex called mitochondrial transmembrane lipoprotein (MTL) complex made of proteins located in the two mitochondrial membranes, including the TOM complex and the core components of the MICOS complex and containing at least digalactosyldiacylglycerol (DGDG).

The protein localises to the mitochondrion inner membrane. In terms of biological role, component of the MICOS complex, a large protein complex of the mitochondrial inner membrane that plays crucial roles in the maintenance of crista junctions, inner membrane architecture, and formation of contact sites to the outer membrane. The sequence is that of MICOS complex subunit MIC10 from Arabidopsis thaliana (Mouse-ear cress).